We begin with the raw amino-acid sequence, 1130 residues long: Roquin-1 (1130 aa).

7 residues coordinate Zn(2+): C14, C17, C33, H35, C38, C50, and D53. An RING-type; degenerate zinc finger spans residues 14 to 54; the sequence is CPICTQTFDETIRKPISLGCGHTVCKMCLNKLHRKACPFDQ. An HEPN-N region spans residues 128–176; sequence VLSRPMQRKLVTLVHCQLVEEEGRIRAMRAARSLGERTVTELILQHQNP. Residues 177–326 form an ROQ region; that stretch reads QQLSSNLWAA…MQSIIDKLQT (150 aa). The tract at residues 327–399 is HEPN-C; the sequence is PASFAQSVQE…GLVDYIQNHS (73 aa). A C3H1-type zinc finger spans residues 413 to 441; it reads KYKTYMCRDMKQRGGCPRGASCTFAHSQE. At S462 the chain carries Phosphoserine. Disordered regions lie at residues 493–567 and 722–750; these read LPNG…DLPP and PHPAQIRPSYPRDPPYSRLPPPQPHPSLD. Over residues 497–506 the composition is skewed to polar residues; the sequence is IASSGSTVTQ. S531 and S535 each carry phosphoserine. 2 stretches are compositionally biased toward pro residues: residues 553 to 567 and 732 to 746; these read NPHPVPPRGPTDLPP and PRDPPYSRLPPPQPH. Phosphoserine occurs at positions 861, 1107, and 1110. Residues 1100-1130 are disordered; that stretch reads KTSSLNLSEDSEGGGDNNDSQRSGVVSNSAP. A compositionally biased stretch (polar residues) spans 1116–1130; that stretch reads NNDSQRSGVVSNSAP.

Interacts with DDX6 and EDC4. Interacts with CCR4-NOT deadenylase complex. Interacts with RC3H1; the interaction is RNA independent. In terms of processing, proteolytically cleaved after Arg-510 and Arg-579 by MALT1 in activated CD4(+) T cells; cleavage at Arg-510 and Arg-579 is critical for promoting RC3H1 degradation in response to T-cell receptor (TCR) stimulation, and hence is necessary for prolonging the stability of a set of mRNAs controlling Th17 cell differentiation. In terms of tissue distribution, widely expressed, with highest levels in lymph node and thymus and slightly lesser amounts in brain, lung, and spleen (at protein level). Very weak expression in heart, muscle, and kidney (at protein level). Expressed in CD4(+) helper T-cells (at protein level).

The protein resides in the cytoplasm. Its subcellular location is the P-body. The protein localises to the cytoplasmic granule. It catalyses the reaction S-ubiquitinyl-[E2 ubiquitin-conjugating enzyme]-L-cysteine + [acceptor protein]-L-lysine = [E2 ubiquitin-conjugating enzyme]-L-cysteine + N(6)-ubiquitinyl-[acceptor protein]-L-lysine.. It functions in the pathway protein modification; protein ubiquitination. Its function is as follows. Post-transcriptional repressor of mRNAs containing a conserved stem loop motif, called constitutive decay element (CDE), which is often located in the 3'-UTR, as in HMGXB3, ICOS, IER3, NFKBID, NFKBIZ, PPP1R10, TNF, TNFRSF4 and in many more mRNAs. Cleaves translationally inactive mRNAs harboring a stem-loop (SL), often located in their 3'-UTRs, during the early phase of inflammation in a helicase UPF1-independent manner. Binds to CDE and promotes mRNA deadenylation and degradation. This process does not involve miRNAs. In follicular helper T (Tfh) cells, represses of ICOS and TNFRSF4/Ox40 expression, thus preventing spontaneous Tfh cell differentiation, germinal center B-cell differentiation in the absence of immunization and autoimmunity. In resting or LPS-stimulated macrophages, controls inflammation by suppressing TNF expression. Also recognizes CDE in its own mRNA and in that of paralogous RC3H2, possibly leading to feedback loop regulation. Inhibits cooperatively with ZC3H12A the differentiation of helper T cells Th17 in lungs. They repress target mRNA encoding the Th17 cell-promoting factors IL6, ICOS, REL, IRF4, NFKBID and NFKBIZ. The cooperation requires RNA-binding by RC3H1 and the nuclease activity of ZC3H12A. Recognizes and binds mRNAs containing a hexaloop stem-loop motif, called alternative decay element (ADE). Together with ZC3H12A, destabilizes TNFRSF4/OX40 mRNA by binding to the conserved stem loop structure in its 3'UTR. Able to interact with double-stranded RNA. miRNA-binding protein that regulates microRNA homeostasis. Enhances DICER-mediated processing of pre-MIR146a but reduces mature MIR146a levels through an increase of 3' end uridylation. Both inhibits ICOS mRNA expression and they may act together to exert the suppression. Acts as a ubiquitin E3 ligase. Pairs with E2 enzymes UBE2A, UBE2B, UBE2D2, UBE2F, UBE2G1, UBE2G2 and UBE2L3 and produces polyubiquitin chains. Shows the strongest activity when paired with UBE2N:UBE2V1 or UBE2N:UBE2V2 E2 complexes and generate both short and long polyubiquitin chains. The polypeptide is Roquin-1 (Mus musculus (Mouse)).